The primary structure comprises 950 residues: 2-oxoglutarate dehydrogenase E1 component (950 aa).

This sequence belongs to the alpha-ketoglutarate dehydrogenase family. In terms of assembly, homodimer. Part of the 2-oxoglutarate dehydrogenase (OGDH) complex composed of E1 (2-oxoglutarate dehydrogenase), E2 (dihydrolipoamide succinyltransferase) and E3 (dihydrolipoamide dehydrogenase); the complex contains multiple copies of the three enzymatic components (E1, E2 and E3). Thiamine diphosphate is required as a cofactor.

It catalyses the reaction N(6)-[(R)-lipoyl]-L-lysyl-[protein] + 2-oxoglutarate + H(+) = N(6)-[(R)-S(8)-succinyldihydrolipoyl]-L-lysyl-[protein] + CO2. Functionally, E1 component of the 2-oxoglutarate dehydrogenase (OGDH) complex which catalyzes the decarboxylation of 2-oxoglutarate, the first step in the conversion of 2-oxoglutarate to succinyl-CoA and CO(2). The chain is 2-oxoglutarate dehydrogenase E1 component from Geobacillus kaustophilus (strain HTA426).